We begin with the raw amino-acid sequence, 230 residues long: Ribose-5-phosphate isomerase A (230 aa).

Substrate is bound by residues Thr-32 to Thr-35, Asp-85 to Asp-88, and Lys-98 to Gly-101. Catalysis depends on Glu-107, which acts as the Proton acceptor. Residue Lys-125 coordinates substrate.

Belongs to the ribose 5-phosphate isomerase family. As to quaternary structure, homodimer.

It catalyses the reaction aldehydo-D-ribose 5-phosphate = D-ribulose 5-phosphate. It functions in the pathway carbohydrate degradation; pentose phosphate pathway; D-ribose 5-phosphate from D-ribulose 5-phosphate (non-oxidative stage): step 1/1. In terms of biological role, catalyzes the reversible conversion of ribose-5-phosphate to ribulose 5-phosphate. This is Ribose-5-phosphate isomerase A from Burkholderia vietnamiensis (strain G4 / LMG 22486) (Burkholderia cepacia (strain R1808)).